The sequence spans 278 residues: MAEMELWFTEQQTPDLGFTCKITKTIYTAKTQYQDLAILETKQFGRMLVLDGAVQTTIADEFCYHELISHVPLFTHPNPKKVAVIGGGDGGVIREILKHDEVEKAYLIEIDREVIEASKKYLPEISCALDDERAEVIITDGIKFVSENKNMFDVIIVDSTDPVGPAVGLFQDSFYKAVFECLKEDGLFVAQTESPFYDQDLIKNVFHAVKSIFPITRLYLGFIPTYPSGLWSFTLGSKKYDPLEVDVSRIKRIDTKYYNPELHKALFALPTFVQEIIK.

Residues 5–238 (ELWFTEQQTP…GLWSFTLGSK (234 aa)) enclose the PABS domain. An S-methyl-5'-thioadenosine-binding site is contributed by Gln-34. Spermidine contacts are provided by His-65 and Asp-89. S-methyl-5'-thioadenosine contacts are provided by residues Glu-109 and 140 to 141 (DG). Asp-158 functions as the Proton acceptor in the catalytic mechanism. Spermidine is bound at residue 158-161 (DSTD). Pro-165 is a binding site for S-methyl-5'-thioadenosine.

Belongs to the spermidine/spermine synthase family. Homodimer or homotetramer.

The protein resides in the cytoplasm. It catalyses the reaction S-adenosyl 3-(methylsulfanyl)propylamine + putrescine = S-methyl-5'-thioadenosine + spermidine + H(+). It functions in the pathway amine and polyamine biosynthesis; spermidine biosynthesis; spermidine from putrescine: step 1/1. Its function is as follows. Catalyzes the irreversible transfer of a propylamine group from the amino donor S-adenosylmethioninamine (decarboxy-AdoMet) to putrescine (1,4-diaminobutane) to yield spermidine. The polypeptide is Polyamine aminopropyltransferase (Caldicellulosiruptor bescii (strain ATCC BAA-1888 / DSM 6725 / KCTC 15123 / Z-1320) (Anaerocellum thermophilum)).